Here is a 348-residue protein sequence, read N- to C-terminus: Short-chain dehydrogenase fogG (348 aa).

Residues L51, R75, D100, and N126 each contribute to the NADP(+) site. Catalysis depends on proton donor residues S180 and Y215. NADP(+) is bound by residues Y215 and K219. The Lowers pKa of active site Tyr role is filled by K219.

It belongs to the short-chain dehydrogenases/reductases (SDR) family.

Its pathway is secondary metabolite biosynthesis. Functionally, short-chain dehydrogenase; part of the gene cluster that mediates the biosynthesis of flavoglaucin and congeners (including aspergin, dihydroauroglaucin and auroglaucin), prenylated salicylaldehyde derivatives carrying a saturated or an unsaturated C-7 side chain. The PKS fogA releases the carboxylic acid (8E,10E,12E)-3,5,7-trihydroxytetradeca-8,10,12-trienoic acid as its product, as well as derivatives with one and two double bonds. FogA is indeed able to reduce the initial triketide, thus being at least partially responsible for the differently saturated heptyl side chains of flavoglaucin congeners. The oxidoreductases fogB, fogC and fogD modify the nascent polyketide in fogA-bound form and, together, fogA, fogB, fogC and fogD are necessary for the formation of the aromatic core and the cyclized PKS products are released as salicyl alcohols. In particular, fogB is responsible for oxidation of a hydroxyl group or reduction of remaining double bond(s) at the C-7 residue whereas fogD is probably involved in the reductive release of the modified PKS products. The cytochrome P450 monooxygenase fogE is then responsible for the hydroxylation at C-3 of the benzene ring. The fogE products are substrates of the prenyltransferase fogH and the prenylated benzyl alcohols are subsequently oxidized by the fogF to produce the final aryl aldehydes flavoglaucin and congeners. The short-chain dehydrogenase fogG does not seem to be involved in the biosynthesis of the prenylated salicylaldehyde derivatives. This Aspergillus ruber (strain CBS 135680) protein is Short-chain dehydrogenase fogG.